The sequence spans 285 residues: Urease accessory protein UreD (285 aa).

It belongs to the UreD family. As to quaternary structure, ureD, UreF and UreG form a complex that acts as a GTP-hydrolysis-dependent molecular chaperone, activating the urease apoprotein by helping to assemble the nickel containing metallocenter of UreC. The UreE protein probably delivers the nickel.

It localises to the cytoplasm. Functionally, required for maturation of urease via the functional incorporation of the urease nickel metallocenter. The polypeptide is Urease accessory protein UreD (Cytophaga hutchinsonii (strain ATCC 33406 / DSM 1761 / CIP 103989 / NBRC 15051 / NCIMB 9469 / D465)).